Here is a 143-residue protein sequence, read N- to C-terminus: Large ribosomal subunit protein uL13 (143 aa).

It belongs to the universal ribosomal protein uL13 family. As to quaternary structure, part of the 50S ribosomal subunit.

Functionally, this protein is one of the early assembly proteins of the 50S ribosomal subunit, although it is not seen to bind rRNA by itself. It is important during the early stages of 50S assembly. The polypeptide is Large ribosomal subunit protein uL13 (Dichelobacter nodosus (strain VCS1703A)).